Here is a 115-residue protein sequence, read N- to C-terminus: Phosphoribosyl-AMP cyclohydrolase (115 aa).

Residue Asp-80 coordinates Mg(2+). Cys-81 is a Zn(2+) binding site. Residues Asp-82 and Asp-84 each coordinate Mg(2+). Zn(2+) is bound by residues Cys-97 and Cys-104.

It belongs to the PRA-CH family. Homodimer. The cofactor is Mg(2+). It depends on Zn(2+) as a cofactor.

It is found in the cytoplasm. The catalysed reaction is 1-(5-phospho-beta-D-ribosyl)-5'-AMP + H2O = 1-(5-phospho-beta-D-ribosyl)-5-[(5-phospho-beta-D-ribosylamino)methylideneamino]imidazole-4-carboxamide. The protein operates within amino-acid biosynthesis; L-histidine biosynthesis; L-histidine from 5-phospho-alpha-D-ribose 1-diphosphate: step 3/9. In terms of biological role, catalyzes the hydrolysis of the adenine ring of phosphoribosyl-AMP. This is Phosphoribosyl-AMP cyclohydrolase from Mycolicibacterium smegmatis (strain ATCC 700084 / mc(2)155) (Mycobacterium smegmatis).